We begin with the raw amino-acid sequence, 100 residues long: NADH-quinone oxidoreductase subunit K 2 (100 aa).

3 consecutive transmembrane segments (helical) span residues 4 to 24 (LWWSILLGVALFVIGAGGVLL), 28 to 48 (ILIVLMSLELLLNSVNINFIA), and 60 to 80 (IFAIFVIAITAAEVAVALGIL).

Belongs to the complex I subunit 4L family. In terms of assembly, NDH-1 is composed of 14 different subunits. Subunits NuoA, H, J, K, L, M, N constitute the membrane sector of the complex.

It is found in the cell inner membrane. It catalyses the reaction a quinone + NADH + 5 H(+)(in) = a quinol + NAD(+) + 4 H(+)(out). Its function is as follows. NDH-1 shuttles electrons from NADH, via FMN and iron-sulfur (Fe-S) centers, to quinones in the respiratory chain. The immediate electron acceptor for the enzyme in this species is believed to be ubiquinone. Couples the redox reaction to proton translocation (for every two electrons transferred, four hydrogen ions are translocated across the cytoplasmic membrane), and thus conserves the redox energy in a proton gradient. The sequence is that of NADH-quinone oxidoreductase subunit K 2 from Rhizobium meliloti (strain 1021) (Ensifer meliloti).